Reading from the N-terminus, the 70-residue chain is uncharacterized protein (70 aa).

This is an uncharacterized protein from Escherichia coli (strain K12).